The primary structure comprises 435 residues: Galactomannan galactosyltransferase 1 (435 aa).

Residues 1–20 (MAKFGSRNKSPKWISNGCCF) lie on the Cytoplasmic side of the membrane. Residues 21–41 (LLGAFTALLLLWGLCSFIIPI) form a helical; Signal-anchor for type II membrane protein membrane-spanning segment. Residues 42–435 (PNTDPKLNSV…SPLPFGYPAA (394 aa)) lie on the Lumenal side of the membrane. Residues Asn-230 and Asn-328 are each glycosylated (N-linked (GlcNAc...) asparagine). The stretch at 321 to 354 (EIVKTYENISERYDEVERKVEGLRRRHAEKVSEK) forms a coiled coil.

This sequence belongs to the glycosyltransferase 34 family.

The protein resides in the golgi apparatus membrane. In terms of biological role, galactomannan galactosyltransferase (GMGT) involved in galactomannan biosynthesis in seed endosperm. GMGT specificity is an important factor regulating the distribution and amount of alpha-1,6-galactose (Gal) substitution of the beta-1,4-linked mannan backbone. The chain is Galactomannan galactosyltransferase 1 (GMGT1) from Cyamopsis tetragonoloba (Guar).